Consider the following 491-residue polypeptide: Ketol-acid reductoisomerase (NADP(+)) (491 aa).

The 194-residue stretch at 15 to 208 folds into the KARI N-terminal Rossmann domain; sequence AQLGKCRFMA…GGHRAGVLES (194 aa). NADP(+) contacts are provided by residues 45–48, arginine 68, arginine 76, serine 78, and 108–110; these read CGAQ and DKQ. The active site involves histidine 132. Glycine 158 contacts NADP(+). 2 consecutive KARI C-terminal knotted domains span residues 209 to 344 and 345 to 484; these read SFVA…NAPQ and FEGK…MTDM. Residues aspartate 217, glutamate 221, glutamate 389, and glutamate 393 each contribute to the Mg(2+) site. Serine 414 serves as a coordination point for substrate.

The protein belongs to the ketol-acid reductoisomerase family. Mg(2+) serves as cofactor.

The catalysed reaction is (2R)-2,3-dihydroxy-3-methylbutanoate + NADP(+) = (2S)-2-acetolactate + NADPH + H(+). It catalyses the reaction (2R,3R)-2,3-dihydroxy-3-methylpentanoate + NADP(+) = (S)-2-ethyl-2-hydroxy-3-oxobutanoate + NADPH + H(+). Its pathway is amino-acid biosynthesis; L-isoleucine biosynthesis; L-isoleucine from 2-oxobutanoate: step 2/4. It participates in amino-acid biosynthesis; L-valine biosynthesis; L-valine from pyruvate: step 2/4. Involved in the biosynthesis of branched-chain amino acids (BCAA). Catalyzes an alkyl-migration followed by a ketol-acid reduction of (S)-2-acetolactate (S2AL) to yield (R)-2,3-dihydroxy-isovalerate. In the isomerase reaction, S2AL is rearranged via a Mg-dependent methyl migration to produce 3-hydroxy-3-methyl-2-ketobutyrate (HMKB). In the reductase reaction, this 2-ketoacid undergoes a metal-dependent reduction by NADPH to yield (R)-2,3-dihydroxy-isovalerate. This chain is Ketol-acid reductoisomerase (NADP(+)), found in Serratia proteamaculans (strain 568).